Here is a 280-residue protein sequence, read N- to C-terminus: Energy-coupling factor transporter ATP-binding protein EcfA2 (280 aa).

One can recognise an ABC transporter domain in the interval 3–245 (INLQNVSYTY…VSLLEKKQLG (243 aa)). 40-47 (GHTGSGKS) is an ATP binding site.

The protein belongs to the ABC transporter superfamily. Energy-coupling factor EcfA family. Forms a stable energy-coupling factor (ECF) transporter complex composed of 2 membrane-embedded substrate-binding proteins (S component), 2 ATP-binding proteins (A component) and 2 transmembrane proteins (T component).

Its subcellular location is the cell membrane. Functionally, ATP-binding (A) component of a common energy-coupling factor (ECF) ABC-transporter complex. Unlike classic ABC transporters this ECF transporter provides the energy necessary to transport a number of different substrates. This chain is Energy-coupling factor transporter ATP-binding protein EcfA2, found in Streptococcus pyogenes serotype M28 (strain MGAS6180).